A 164-amino-acid polypeptide reads, in one-letter code: Endoribonuclease YbeY (164 aa).

The Zn(2+) site is built by histidine 114, histidine 118, and histidine 124.

The protein belongs to the endoribonuclease YbeY family. It depends on Zn(2+) as a cofactor.

It is found in the cytoplasm. Single strand-specific metallo-endoribonuclease involved in late-stage 70S ribosome quality control and in maturation of the 3' terminus of the 16S rRNA. The polypeptide is Endoribonuclease YbeY (Mycoplasmoides gallisepticum (strain R(low / passage 15 / clone 2)) (Mycoplasma gallisepticum)).